The primary structure comprises 399 residues: Argininosuccinate synthase (399 aa).

Residue 8 to 16 (AYSGGLDTS) coordinates ATP. L-citrulline-binding residues include Tyr-87 and Ser-92. An ATP-binding site is contributed by Gly-117. Positions 119, 123, and 124 each coordinate L-aspartate. Asn-123 contacts L-citrulline. Residues Arg-127, Ser-176, Ser-185, Glu-261, and Tyr-273 each contribute to the L-citrulline site.

It belongs to the argininosuccinate synthase family. Type 1 subfamily. Homotetramer.

The protein resides in the cytoplasm. The enzyme catalyses L-citrulline + L-aspartate + ATP = 2-(N(omega)-L-arginino)succinate + AMP + diphosphate + H(+). It participates in amino-acid biosynthesis; L-arginine biosynthesis; L-arginine from L-ornithine and carbamoyl phosphate: step 2/3. This chain is Argininosuccinate synthase, found in Clostridioides difficile (strain 630) (Peptoclostridium difficile).